Here is a 56-residue protein sequence, read N- to C-terminus: Aspartyl-phosphate phosphatase YisI (56 aa).

Belongs to the spo0E family.

In terms of biological role, aspartyl-phosphate phosphatase which specifically dephosphorylates the sporulation transcription factor Spo0A-P and negatively regulates the sporulation initiation pathway in order to control the proper timing of sporulation. In Bacillus subtilis (strain 168), this protein is Aspartyl-phosphate phosphatase YisI (yisI).